The chain runs to 200 residues: 2,3-bisphosphoglycerate-dependent phosphoglycerate mutase (200 aa).

His9 serves as the catalytic Tele-phosphohistidine intermediate. His142 is a catalytic residue.

This sequence belongs to the phosphoglycerate mutase family. As to quaternary structure, homodimer.

It carries out the reaction (2R)-2-phosphoglycerate = (2R)-3-phosphoglycerate. Its pathway is carbohydrate degradation; glycolysis; pyruvate from D-glyceraldehyde 3-phosphate: step 3/5. Its function is as follows. Catalyzes the interconversion of 2-phosphoglycerate and 3-phosphoglycerate. This Thermoplasma acidophilum (strain ATCC 25905 / DSM 1728 / JCM 9062 / NBRC 15155 / AMRC-C165) protein is 2,3-bisphosphoglycerate-dependent phosphoglycerate mutase.